The primary structure comprises 693 residues: Golgin subfamily A member 6A (693 aa).

Positions Leu14–Leu611 form a coiled coil. Disordered regions lie at residues Asn20–Ser69, Leu497–Gln547, and Asn661–Thr693. A compositionally biased stretch (polar residues) spans Ser54–Ser69. Positions Leu537–Gln547 are enriched in basic and acidic residues. A compositionally biased stretch (polar residues) spans Asp676–Thr693.

The protein belongs to the GOLGA6 family. In terms of tissue distribution, highly expressed in seminiferous tubes in testis. Highly expressed in spermatids, barely detectable in late pachytene spermatocytes, and not detectable in spermatogonia. Detected at intermediate levels in pancreas and lymph nodes, and at much lower levels in spleen, peripheral blood leukocytes, skeletal muscle, liver, lung, placenta, brain and heart.

The protein is Golgin subfamily A member 6A (GOLGA6A) of Homo sapiens (Human).